A 204-amino-acid chain; its full sequence is Imidazoleglycerol-phosphate dehydratase (204 aa).

It belongs to the imidazoleglycerol-phosphate dehydratase family.

It is found in the cytoplasm. It carries out the reaction D-erythro-1-(imidazol-4-yl)glycerol 3-phosphate = 3-(imidazol-4-yl)-2-oxopropyl phosphate + H2O. It participates in amino-acid biosynthesis; L-histidine biosynthesis; L-histidine from 5-phospho-alpha-D-ribose 1-diphosphate: step 6/9. The polypeptide is Imidazoleglycerol-phosphate dehydratase (Rhodococcus opacus (strain B4)).